Reading from the N-terminus, the 581-residue chain is Arginine--tRNA ligase (581 aa).

A 'HIGH' region motif is present at residues 126 to 136 (PNLAKEMHVGH).

This sequence belongs to the class-I aminoacyl-tRNA synthetase family. Monomer.

The protein localises to the cytoplasm. The enzyme catalyses tRNA(Arg) + L-arginine + ATP = L-arginyl-tRNA(Arg) + AMP + diphosphate. The protein is Arginine--tRNA ligase of Shewanella baltica (strain OS155 / ATCC BAA-1091).